A 366-amino-acid polypeptide reads, in one-letter code: uncharacterized protein (366 aa).

Residues 1-135 (MNQTGRTIGG…PPKNVDTIDK (135 aa)) are disordered. Residues 26–38 (PSEDRVSSRDETP) show a composition bias toward basic and acidic residues. A Phosphoserine modification is found at S69. T76 carries the phosphothreonine modification. Residue K78 forms a Glycyl lysine isopeptide (Lys-Gly) (interchain with G-Cter in ubiquitin) linkage. The span at 97 to 108 (QHNHHHHRRTSH) shows a compositional bias: basic residues. Residue K187 forms a Glycyl lysine isopeptide (Lys-Gly) (interchain with G-Cter in ubiquitin) linkage. Phosphothreonine is present on T189. K242 is covalently cross-linked (Glycyl lysine isopeptide (Lys-Gly) (interchain with G-Cter in ubiquitin)). Phosphoserine occurs at positions 288 and 294. The interval 313 to 366 (THSGHLEQKDVDDNRTSVPVTATQGSGHEDVVKKENTGNKLLRRVKSLKTSKKH) is disordered. A compositionally biased stretch (basic and acidic residues) spans 316–327 (GHLEQKDVDDNR). Residues 328 to 338 (TSVPVTATQGS) show a composition bias toward polar residues. A compositionally biased stretch (basic and acidic residues) spans 339-349 (GHEDVVKKENT). Residues 353 to 366 (LLRRVKSLKTSKKH) show a composition bias toward basic residues. At S359 the chain carries Phosphoserine.

Belongs to the pal1 family.

Its subcellular location is the cytoplasm. The protein resides in the nucleus. This is an uncharacterized protein from Saccharomyces cerevisiae (strain ATCC 204508 / S288c) (Baker's yeast).